The primary structure comprises 176 residues: Acireductone dioxygenase (176 aa).

Fe(2+)-binding residues include His-100, His-102, Glu-106, and His-145. Positions 100, 102, 106, and 145 each coordinate Ni(2+).

It belongs to the acireductone dioxygenase (ARD) family. In terms of assembly, monomer. Fe(2+) serves as cofactor. Requires Ni(2+) as cofactor.

The enzyme catalyses 1,2-dihydroxy-5-(methylsulfanyl)pent-1-en-3-one + O2 = 3-(methylsulfanyl)propanoate + CO + formate + 2 H(+). The catalysed reaction is 1,2-dihydroxy-5-(methylsulfanyl)pent-1-en-3-one + O2 = 4-methylsulfanyl-2-oxobutanoate + formate + 2 H(+). The protein operates within amino-acid biosynthesis; L-methionine biosynthesis via salvage pathway; L-methionine from S-methyl-5-thio-alpha-D-ribose 1-phosphate: step 5/6. Its function is as follows. Catalyzes 2 different reactions between oxygen and the acireductone 1,2-dihydroxy-3-keto-5-methylthiopentene (DHK-MTPene) depending upon the metal bound in the active site. Fe-containing acireductone dioxygenase (Fe-ARD) produces formate and 2-keto-4-methylthiobutyrate (KMTB), the alpha-ketoacid precursor of methionine in the methionine recycle pathway. Ni-containing acireductone dioxygenase (Ni-ARD) produces methylthiopropionate, carbon monoxide and formate, and does not lie on the methionine recycle pathway. The protein is Acireductone dioxygenase of Bacillus pumilus (strain SAFR-032).